A 271-amino-acid polypeptide reads, in one-letter code: Transmembrane protein 150A (271 aa).

At 1 to 2 (MT) the chain is on the cytoplasmic side. Residues 3 to 23 (AWILLPVSLSAFSITGIWTVY) traverse the membrane as a helical segment. The Extracellular portion of the chain corresponds to 24-75 (AMAVMNRHVCPVENWSYNESCSPDPAEQGGPKSCCTLDDVPLISKCGTYPPE). Asn-37 and Asn-41 each carry an N-linked (GlcNAc...) asparagine glycan. A helical membrane pass occupies residues 76 to 96 (SCLFSLIGNMGAVMVALICLL). The Cytoplasmic segment spans residues 97–108 (RYGQLLEQSRHS). A helical membrane pass occupies residues 109-129 (WINTTALITGCTNAAGLVVVG). At 130 to 140 (NFQVDHAKSLH) the chain is on the extracellular side. The chain crosses the membrane as a helical span at residues 141–161 (YIGTGVAFTAGLLFVCLHCVL). At 162 to 178 (FYHGATTPLDMAMAYLR) the chain is on the cytoplasmic side. Residues 179 to 199 (SVLAVIAFITLVLSGVFFLHE) form a helical membrane-spanning segment. Topologically, residues 200–211 (SSQLQHGAALCE) are extracellular. The chain crosses the membrane as a helical span at residues 212-232 (WVFVLDILIFYGTFSYEFGTI). The Cytoplasmic portion of the chain corresponds to 233–271 (SSDTLVAALQPAPGRACKSSGSSSTSTHLNCAPESIAMI).

The protein belongs to the DRAM/TMEM150 family. Interacts (via C-terminal cytoplasmic tail) with PI4KA.

The protein localises to the cell membrane. In terms of biological role, regulates localization of phosphatidylinositol 4-kinase (PI4K) to the plasma membrane, possibly by reducing the association of TTC7 (TTC7A or TTC7B) with the PI4K complex. Acts as a regulator of phosphatidylinositol 4-phosphate (PtdIns(4)P) synthesis. May also play a role in fasting-induced catabolism. The sequence is that of Transmembrane protein 150A (Tmem150a) from Mus musculus (Mouse).